The following is a 733-amino-acid chain: Zinc finger protein indra (733 aa).

The ZAD domain maps to 17 to 91 (VRCDHCGTSQ…RETVDRVQEQ (75 aa)). The Zn(2+) site is built by Cys-19, Cys-22, Cys-64, and Cys-67. Over residues 90–100 (EQPAKKTKVAE) the composition is skewed to basic and acidic residues. The disordered stretch occupies residues 90–121 (EQPAKKTKVAEIEEPSTQESDKKAVKVPKKNT). A phosphoserine mark is found at Ser-109, Ser-153, and Ser-176. Residues Thr-180 and Thr-188 each carry the phosphothreonine modification. C2H2-type zinc fingers lie at residues 228–251 (FQCP…QKEH) and 259–282 (YPCT…RDTH). Basic and acidic residues predominate over residues 285–316 (TFESEAKTKAKESKEKEAKSGAKNKIDAKAKE). Residues 285–336 (TFESEAKTKAKESKEKEAKSGAKNKIDAKAKETNAVSQRKKPKEKKSKEKKT) are disordered. 2 consecutive C2H2-type zinc fingers follow at residues 416–439 (FQCE…KTVH) and 447–469 (FKCH…MTLH). Disordered regions lie at residues 499-525 (IENT…FTNR) and 540-622 (AFKT…SSDV). The span at 592-602 (SVSTTNGNSPA) shows a compositional bias: polar residues. Ser-600, Ser-642, and Ser-646 each carry phosphoserine. Thr-647 is subject to Phosphothreonine. 2 C2H2-type zinc fingers span residues 653 to 676 (LSCD…EKKH) and 708 to 733 (LPCG…RKRH). Ser-654 bears the Phosphoserine mark.

Belongs to the krueppel C2H2-type zinc-finger protein family.

Its subcellular location is the nucleus. The protein resides in the nucleolus. In terms of biological role, required for rDNA copy number maintenance and non-random sister chromatid segregation (NRSS) following unequal sister chromatid exchange. Binds ribosomal DNA (rDNA) preferentially binding to intergenic spacers (IGS) regions on both X and Y chromosomes. Essential for NRSS, a mechanism which contributes to the recovery and maintenance of inherently unstable rDNA copy numbers so that the integrity of the germline genome is upheld over generations and germline immortality is sustained. May be involved in transcriptional regulation. This chain is Zinc finger protein indra, found in Drosophila melanogaster (Fruit fly).